The chain runs to 406 residues: Cyclin-dependent kinase 4 homolog (406 aa).

The 287-residue stretch at 102-388 (TFLFQALGKG…ARGALSHPFL (287 aa)) folds into the Protein kinase domain. ATP is bound by residues 108-116 (LGKGAYGNV) and Lys-131. The Proton acceptor role is filled by Asp-233. Mg(2+)-binding residues include Asn-238 and Asp-251.

The protein belongs to the protein kinase superfamily. CMGC Ser/Thr protein kinase family. CDC2/CDKX subfamily. In terms of assembly, interacts with cyd-1; the interaction is likely involved in regulating cdk-4 activity. The cofactor is Mg(2+).

The catalysed reaction is L-seryl-[protein] + ATP = O-phospho-L-seryl-[protein] + ADP + H(+). It catalyses the reaction L-threonyl-[protein] + ATP = O-phospho-L-threonyl-[protein] + ADP + H(+). Functionally, serine/threonine-protein kinase which, in association with cyclin D-like protein cyd-1, is required for the progression through the G1 phase of the cell cycle during postembryonic development by phosphorylating and inhibiting lin-35 and fzr-1. In complex with cyd-1, involved in sex determination during gonadogenesis by regulating the asymmetric division of the somatic gonadal precursor cell (SGP). The protein is Cyclin-dependent kinase 4 homolog of Caenorhabditis elegans.